Here is a 381-residue protein sequence, read N- to C-terminus: Homoserine O-succinyltransferase (381 aa).

In terms of domain architecture, AB hydrolase-1 spans 45-360 (NAVLVCHALN…PHGHDAFLLD (316 aa)). Residue S151 is the Nucleophile of the active site. Substrate is bound at residue R221. Active-site residues include D321 and H354. Position 355 (D355) interacts with substrate.

The protein belongs to the AB hydrolase superfamily. MetX family. In terms of assembly, homodimer.

The protein resides in the cytoplasm. It carries out the reaction L-homoserine + succinyl-CoA = O-succinyl-L-homoserine + CoA. It functions in the pathway amino-acid biosynthesis; L-methionine biosynthesis via de novo pathway; O-succinyl-L-homoserine from L-homoserine: step 1/1. In terms of biological role, transfers a succinyl group from succinyl-CoA to L-homoserine, forming succinyl-L-homoserine. In Paraburkholderia xenovorans (strain LB400), this protein is Homoserine O-succinyltransferase.